Consider the following 415-residue polypeptide: Heterogeneous nuclear ribonucleoprotein F (415 aa).

N-acetylmethionine is present on M1. The residue at position 2 (M2) is an N-acetylmethionine; in Heterogeneous nuclear ribonucleoprotein F, N-terminally processed. Residues 11–90 (YVVKLRGLPW…RYIEVFKSHR (80 aa)) form the RRM 1 domain. K72 is covalently cross-linked (Glycyl lysine isopeptide (Lys-Gly) (interchain with G-Cter in SUMO)). Residues 81 to 86 (RYIEVF) form an interaction with RNA region. K87 participates in a covalent cross-link: Glycyl lysine isopeptide (Lys-Gly) (interchain with G-Cter in SUMO2). S104, S107, and S161 each carry phosphoserine. In terms of domain architecture, RRM 2 spans 111–188 (GFVRLRGLPF…RYIEVFKSSQ (78 aa)). K167 participates in a covalent cross-link: Glycyl lysine isopeptide (Lys-Gly) (interchain with G-Cter in SUMO2). Positions 179-184 (RYIEVF) are interaction with RNA. A Glycyl lysine isopeptide (Lys-Gly) (interchain with G-Cter in SUMO2) cross-link involves residue K185. S187, S193, and S195 each carry phosphoserine. K200 carries the N6-acetyllysine; alternate modification. A Glycyl lysine isopeptide (Lys-Gly) (interchain with G-Cter in SUMO2); alternate cross-link involves residue K200. A Phosphothreonine modification is found at T215. K224 is subject to N6-acetyllysine; alternate. K224 participates in a covalent cross-link: Glycyl lysine isopeptide (Lys-Gly) (interchain with G-Cter in SUMO2); alternate. S265 bears the Phosphoserine mark. Residues 289 to 366 (HCVHMRGLPY…IELFLNSTTG (78 aa)) enclose the RRM 3 domain. Residues 355–360 (RYIELF) form an interaction with RNA region.

As to quaternary structure, identified in the spliceosome C complex. Interacts with AGO1, AGO2, TBP and TXNL4/DIM1. In terms of processing, sumoylated.

The protein resides in the nucleus. The protein localises to the nucleoplasm. Its function is as follows. Component of the heterogeneous nuclear ribonucleoprotein (hnRNP) complexes which provide the substrate for the processing events that pre-mRNAs undergo before becoming functional, translatable mRNAs in the cytoplasm. Plays a role in the regulation of alternative splicing events. Binds G-rich sequences in pre-mRNAs and keeps target RNA in an unfolded state. The protein is Heterogeneous nuclear ribonucleoprotein F (Hnrnpf) of Mus musculus (Mouse).